A 542-amino-acid polypeptide reads, in one-letter code: CTP synthase (542 aa).

The tract at residues 1-266 (MATNYIFVTG…DDFICQRFHL (266 aa)) is amidoligase domain. Ser-14 contacts CTP. Ser-14 contacts UTP. Residues 15–20 (SLGKGI) and Asp-72 each bind ATP. 2 residues coordinate Mg(2+): Asp-72 and Glu-140. CTP is bound by residues 147–149 (DIE), 187–192 (KTKPTQ), and Lys-223. UTP contacts are provided by residues 187-192 (KTKPTQ) and Lys-223. 239-241 (KDV) is a binding site for ATP. The 252-residue stretch at 291 to 542 (VIGMVGKYTE…VKAAKDNQKK (252 aa)) folds into the Glutamine amidotransferase type-1 domain. Gly-352 provides a ligand contact to L-glutamine. The Nucleophile; for glutamine hydrolysis role is filled by Cys-379. Residues 380 to 383 (LGMQ), Glu-403, and Arg-470 each bind L-glutamine. Residues His-515 and Glu-517 contribute to the active site.

This sequence belongs to the CTP synthase family. Homotetramer.

The enzyme catalyses UTP + L-glutamine + ATP + H2O = CTP + L-glutamate + ADP + phosphate + 2 H(+). The catalysed reaction is L-glutamine + H2O = L-glutamate + NH4(+). It carries out the reaction UTP + NH4(+) + ATP = CTP + ADP + phosphate + 2 H(+). Its pathway is pyrimidine metabolism; CTP biosynthesis via de novo pathway; CTP from UDP: step 2/2. Its activity is regulated as follows. Allosterically activated by GTP, when glutamine is the substrate; GTP has no effect on the reaction when ammonia is the substrate. The allosteric effector GTP functions by stabilizing the protein conformation that binds the tetrahedral intermediate(s) formed during glutamine hydrolysis. Inhibited by the product CTP, via allosteric rather than competitive inhibition. Catalyzes the ATP-dependent amination of UTP to CTP with either L-glutamine or ammonia as the source of nitrogen. Regulates intracellular CTP levels through interactions with the four ribonucleotide triphosphates. The protein is CTP synthase of Pasteurella multocida (strain Pm70).